We begin with the raw amino-acid sequence, 704 residues long: uncharacterized protein (704 aa).

This is an uncharacterized protein from Rickettsia conorii (strain ATCC VR-613 / Malish 7).